The sequence spans 509 residues: Transcription factor SOX-9 (509 aa).

Disordered stretches follow at residues 1 to 67 and 160 to 273; these read MNLL…SEED and RLRV…FRDV. Positions 30–41 are enriched in low complexity; it reads SAGSPCPSGSGS. A compositionally biased stretch (polar residues) spans 42 to 52; it reads DTENTRPQENT. 2 stretches are compositionally biased toward basic and acidic residues: residues 56 to 67 and 160 to 174; these read GEPDLKKESEED and RLRV…DYKY. The segment at 63–103 is dimerization (DIM); that stretch reads ESEEDKFPVCIREAVSQVLKGYDWTLVPMPVRVNGSSKNKP. Residues 63 to 103 form a PQA region; it reads ESEEDKFPVCIREAVSQVLKGYDWTLVPMPVRVNGSSKNKP. Residue Ser64 is modified to Phosphoserine. Residues 105-173 constitute a DNA-binding region (HMG box); the sequence is VKRPMNAFMV…QHKKDHPDYK (69 aa). Ser211 carries the post-translational modification Phosphoserine. The tract at residues 224–307 is transactivation domain (TAM); it reads PGEHSGQSQG…LPPNGHPGVP (84 aa). 2 consecutive short sequence motifs (9aaTAD) follow at residues 275–284 and 290–298; these read IGELSSDVIS and DVNEFDQYL. The tract at residues 330–415 is disordered; it reads SAGHVWMSKQ…HYSEQQQHSP (86 aa). The segment covering 341-376 has biased composition (pro residues); sequence APPPPPQQPPQAPPAPQAPPQPQAAPPQQPAAPPQQ. The segment covering 380 to 415 has biased composition (polar residues); that stretch reads HTLTTLSSEPGQSQRTHIKTEQLSPSHYSEQQQHSP. A transactivation domain (TAC) region spans residues 394–509; that stretch reads RTHIKTEQLS…QPVYTQLTRP (116 aa). Lys398 is covalently cross-linked (Glycyl lysine isopeptide (Lys-Gly) (interchain with G-Cter in ubiquitin)). The short motif at 460–468 is the 9aaTAD 3 element; the sequence is TGLYSTFTY. Residues 479–509 form a disordered region; sequence PIADTSGVPSIPQTHSPQHWEQPVYTQLTRP. Residues 485–509 are compositionally biased toward polar residues; sequence GVPSIPQTHSPQHWEQPVYTQLTRP.

As to quaternary structure, homodimer; homodimerization is required for activity. Interacts (via C-terminus) with ZNF219; forming a complex that binds to the COL2A1 promoter and activates COL2A1 expression. Interacts with DDRGK1. Interacts with EP300/p300. Interacts with beta-catenin (CTNNB1); inhibiting CTNNB1 activity by competing with the binding sites of TCF/LEF within CTNNB1. Post-translationally, acetylated; acetylation impairs nuclear localization and ability to transactivate expression of target genes. Deacetylated by SIRT1. Phosphorylation at Ser-64 and Ser-211 by PKA increases transcriptional activity and may help delay chondrocyte maturation downstream of PTHLH/PTHrP signaling. Phosphorylation at either Ser-64 or Ser-211 is required for sumoylation, but phosphorylation is not dependent on sumoylation. Phosphorylated on tyrosine residues; tyrosine dephosphorylation by PTPN11/SHP2 blocks SOX9 phosphorylation by PKA and subsequent SUMOylation. In terms of processing, ubiquitinated; ubiquitination leads to proteasomal degradation and is negatively regulated by DDRGK1. Post-translationally, sumoylated; phosphorylation at either Ser-64 or Ser-211 is required for sumoylation. Sumoylation is induced by BMP signaling pathway.

It is found in the nucleus. In terms of biological role, transcription factor that plays a key role in chondrocytes differentiation and skeletal development. Specifically binds the 5'-ACAAAG-3' DNA motif present in enhancers and super-enhancers and promotes expression of genes important for chondrogenesis, including cartilage matrix protein-coding genes COL2A1, COL4A2, COL9A1, COL11A2 and ACAN, SOX5 and SOX6. Also binds to some promoter regions. Plays a central role in successive steps of chondrocyte differentiation. Absolutely required for precartilaginous condensation, the first step in chondrogenesis during which skeletal progenitors differentiate into prechondrocytes. Together with SOX5 and SOX6, required for overt chondrogenesis when condensed prechondrocytes differentiate into early stage chondrocytes, the second step in chondrogenesis. Later, required to direct hypertrophic maturation and block osteoblast differentiation of growth plate chondrocytes: maintains chondrocyte columnar proliferation, delays prehypertrophy and then prevents osteoblastic differentiation of chondrocytes by lowering beta-catenin (CTNNB1) signaling and RUNX2 expression. Also required for chondrocyte hypertrophy, both indirectly, by keeping the lineage fate of chondrocytes, and directly, by remaining present in upper hypertrophic cells and transactivating COL10A1 along with MEF2C. Low lipid levels are the main nutritional determinant for chondrogenic commitment of skeletal progenitor cells: when lipids levels are low, FOXO (FOXO1 and FOXO3) transcription factors promote expression of SOX9, which induces chondrogenic commitment and suppresses fatty acid oxidation. Mechanistically, helps, but is not required, to remove epigenetic signatures of transcriptional repression and deposit active promoter and enhancer marks at chondrocyte-specific genes. Acts in cooperation with the Hedgehog pathway-dependent GLI (GLI1 and GLI3) transcription factors. In addition to cartilage development, also acts as a regulator of proliferation and differentiation in epithelial stem/progenitor cells: involved in the lung epithelium during branching morphogenesis, by balancing proliferation and differentiation and regulating the extracellular matrix. Controls epithelial branching during kidney development. The chain is Transcription factor SOX-9 from Homo sapiens (Human).